The sequence spans 66 residues: Ornithorhynchus venom defensin-like peptide A (66 aa).

A signal peptide spans 1–22 (MRLTYLLLLLVAVLFQAGSGSA). Positions 23–24 (EP) are excised as a propeptide. Cystine bridges form between C33-C63, C40-C56, and C48-C64.

As to expression, produced by the crural gland and detected in venom from the spur located on each male hind leg. Is the only OvDLP that is expressed in venom gland alone.

It is found in the secreted. Functionally, does not show antimicrobial, myotoxic, hemolytic and cell-promoting activities. This chain is Ornithorhynchus venom defensin-like peptide A, found in Ornithorhynchus anatinus (Duckbill platypus).